Here is a 319-residue protein sequence, read N- to C-terminus: Cobalamin biosynthesis protein CbiB (319 aa).

Helical transmembrane passes span 52–74, 79–101, 155–177, 207–229, and 296–318; these read IGGG…GVLA, IHPW…GRSL, GIIA…YKAV, YLPA…LSGW, and LMWV…LSGV.

It belongs to the CobD/CbiB family.

Its subcellular location is the cell membrane. It functions in the pathway cofactor biosynthesis; adenosylcobalamin biosynthesis; adenosylcobalamin from cob(II)yrinate a,c-diamide: step 4/7. Functionally, converts cobyric acid to cobinamide by the addition of aminopropanol on the F carboxylic group. However, the true cosubstrate could be (R)-1-amino-2-propanol O-2-phosphate, leading to cobinamide phosphate. In Salmonella typhi, this protein is Cobalamin biosynthesis protein CbiB.